The sequence spans 172 residues: Protein-export protein SecB (172 aa).

Belongs to the SecB family. In terms of assembly, homotetramer, a dimer of dimers. One homotetramer interacts with 1 SecA dimer.

The protein resides in the cytoplasm. In terms of biological role, one of the proteins required for the normal export of preproteins out of the cell cytoplasm. It is a molecular chaperone that binds to a subset of precursor proteins, maintaining them in a translocation-competent state. It also specifically binds to its receptor SecA. This is Protein-export protein SecB from Maricaulis maris (strain MCS10) (Caulobacter maris).